Reading from the N-terminus, the 192-residue chain is Imidazoleglycerol-phosphate dehydratase (192 aa).

Belongs to the imidazoleglycerol-phosphate dehydratase family.

The protein localises to the cytoplasm. It catalyses the reaction D-erythro-1-(imidazol-4-yl)glycerol 3-phosphate = 3-(imidazol-4-yl)-2-oxopropyl phosphate + H2O. It functions in the pathway amino-acid biosynthesis; L-histidine biosynthesis; L-histidine from 5-phospho-alpha-D-ribose 1-diphosphate: step 6/9. The sequence is that of Imidazoleglycerol-phosphate dehydratase from Staphylococcus saprophyticus subsp. saprophyticus (strain ATCC 15305 / DSM 20229 / NCIMB 8711 / NCTC 7292 / S-41).